An 805-amino-acid polypeptide reads, in one-letter code: DNA gyrase subunit B (805 aa).

The Toprim domain occupies 431–546 (CEMYIVEGDS…NECVYIAQPP (116 aa)). Glu-437, Asp-511, and Asp-513 together coordinate Mg(2+).

Belongs to the type II topoisomerase GyrB family. Heterotetramer, composed of two GyrA and two GyrB chains. In the heterotetramer, GyrA contains the active site tyrosine that forms a transient covalent intermediate with DNA, while GyrB binds cofactors and catalyzes ATP hydrolysis. Mg(2+) serves as cofactor. The cofactor is Mn(2+). Requires Ca(2+) as cofactor.

The protein resides in the cytoplasm. It carries out the reaction ATP-dependent breakage, passage and rejoining of double-stranded DNA.. In terms of biological role, a type II topoisomerase that negatively supercoils closed circular double-stranded (ds) DNA in an ATP-dependent manner to modulate DNA topology and maintain chromosomes in an underwound state. Negative supercoiling favors strand separation, and DNA replication, transcription, recombination and repair, all of which involve strand separation. Also able to catalyze the interconversion of other topological isomers of dsDNA rings, including catenanes and knotted rings. Type II topoisomerases break and join 2 DNA strands simultaneously in an ATP-dependent manner. The chain is DNA gyrase subunit B from Chlamydia pneumoniae (Chlamydophila pneumoniae).